Here is a 467-residue protein sequence, read N- to C-terminus: Membrane-bound lytic murein transglycosylase F (467 aa).

The signal sequence occupies residues 1 to 33; it reads MTELFRHSKHLLASLALLSVLGLMLAMHPSPSA. Positions 34 to 266 are non-LT domain; the sequence is IERIMARGEL…KLEDRFYGHV (233 aa). Residues 268 to 467 are LT domain; that stretch reads QFNLYAARSF…RRDDTLIALN (200 aa). Glu313 is an active-site residue.

In the N-terminal section; belongs to the bacterial solute-binding protein 3 family. It in the C-terminal section; belongs to the transglycosylase Slt family.

The protein localises to the cell outer membrane. The catalysed reaction is Exolytic cleavage of the (1-&gt;4)-beta-glycosidic linkage between N-acetylmuramic acid (MurNAc) and N-acetylglucosamine (GlcNAc) residues in peptidoglycan, from either the reducing or the non-reducing ends of the peptidoglycan chains, with concomitant formation of a 1,6-anhydrobond in the MurNAc residue.. Functionally, murein-degrading enzyme that degrades murein glycan strands and insoluble, high-molecular weight murein sacculi, with the concomitant formation of a 1,6-anhydromuramoyl product. Lytic transglycosylases (LTs) play an integral role in the metabolism of the peptidoglycan (PG) sacculus. Their lytic action creates space within the PG sacculus to allow for its expansion as well as for the insertion of various structures such as secretion systems and flagella. The polypeptide is Membrane-bound lytic murein transglycosylase F (Alcanivorax borkumensis (strain ATCC 700651 / DSM 11573 / NCIMB 13689 / SK2)).